Reading from the N-terminus, the 399-residue chain is MSQPVAITDGIYWVGAVDWNIRYFHGPAFSTHRGTTYNAYLIVDDKTALVDTVYEPFKEELIAKLKQIKDPVKLDYLVVNHTESDHAGAFPAIMELCPDAHVLCTQRAFDSLKAHYSHIDFNYTIVKTGTSVSLGKRSLTFIEAPMLHWPDSMFTYVPEEALLLPNDAFGQHIATSVRFDDQVDAGLIMDEAAKYYANILMPFSNLITKKLDEIQKINLAIKTIAPSHGIIWRKDPGRIIEAYARWAEGQGKAKAVIAYDTMWLSTEKMAHALMDGLVAGGCEVKLFKLSVSDRNDVIKEILDARAVLVGSPTINNDILPVVSPLLDDLVGLRPKNKVGLAFGAYGWGGGAQKILEERLKAAKIELIAEPGPTVQWVPRGEDLQRCYELGRKIAARIAD.

Residues 32-221 (HRGTTYNAYL…DEIQKINLAI (190 aa)) form a zinc metallo-hydrolase region. Residues His81, Glu83, Asp85, His148, Asp167, and His228 each coordinate Fe cation. The 140-residue stretch at 255-394 (AVIAYDTMWL…RCYELGRKIA (140 aa)) folds into the Flavodoxin-like domain.

In the N-terminal section; belongs to the zinc metallo-hydrolase group 3 family. In terms of assembly, homodimer. FMN serves as cofactor. Requires Fe cation as cofactor.

Has nitric oxide reductase activity in combination with Hrb; probably involved in nitrosative stress protection. This Moorella thermoacetica (strain ATCC 39073 / JCM 9320) protein is Nitric oxide reductase (fprA).